The chain runs to 509 residues: Aldehyde dehydrogenase 1A1 (509 aa).

NAD(+)-binding positions include Ile-175–Asn-178, Lys-201–Glu-204, Gly-234–Pro-235, Gly-254–Ser-255, and Glu-277–Gly-279. The active-site Proton acceptor is the Glu-277. Cys-311 functions as the Nucleophile in the catalytic mechanism. Residues Glu-357–Lys-361 and Glu-408–Phe-410 each bind NAD(+).

The protein belongs to the aldehyde dehydrogenase family. Homotetramer.

The protein localises to the cytoplasm. Its subcellular location is the cytosol. It localises to the cell projection. The protein resides in the axon. The catalysed reaction is an aldehyde + NAD(+) + H2O = a carboxylate + NADH + 2 H(+). It catalyses the reaction all-trans-retinal + NAD(+) + H2O = all-trans-retinoate + NADH + 2 H(+). The enzyme catalyses 9-cis-retinal + NAD(+) + H2O = 9-cis-retinoate + NADH + 2 H(+). It carries out the reaction 11-cis-retinal + NAD(+) + H2O = 11-cis-retinoate + NADH + 2 H(+). The catalysed reaction is 13-cis-retinal + NAD(+) + H2O = 13-cis-retinoate + NADH + 2 H(+). It catalyses the reaction 3-deoxyglucosone + NAD(+) + H2O = 2-dehydro-3-deoxy-D-gluconate + NADH + 2 H(+). The enzyme catalyses (E)-4-hydroxynon-2-enal + NAD(+) + H2O = (E)-4-hydroxynon-2-enoate + NADH + 2 H(+). It carries out the reaction malonaldehyde + NAD(+) + H2O = 3-oxopropanoate + NADH + 2 H(+). The catalysed reaction is hexanal + NAD(+) + H2O = hexanoate + NADH + 2 H(+). It catalyses the reaction propanal + NAD(+) + H2O = propanoate + NADH + 2 H(+). The enzyme catalyses acetaldehyde + NAD(+) + H2O = acetate + NADH + 2 H(+). It carries out the reaction benzaldehyde + NAD(+) + H2O = benzoate + NADH + 2 H(+). The catalysed reaction is 4-aminobutanal + NAD(+) + H2O = 4-aminobutanoate + NADH + 2 H(+). It participates in cofactor metabolism; retinol metabolism. Its function is as follows. Cytosolic dehydrogenase that catalyzes the irreversible oxidation of a wide range of aldehydes to their corresponding carboxylic acid. Functions downstream of retinol dehydrogenases and catalyzes the oxidation of retinaldehyde into retinoic acid, the second step in the oxidation of retinol/vitamin A into retinoic acid. This pathway is crucial to control the levels of retinol and retinoic acid, two important molecules which excess can be teratogenic and cytotoxic. Also oxidizes aldehydes resulting from lipid peroxidation like (E)-4-hydroxynon-2-enal/HNE, malonaldehyde and hexanal that form protein adducts and are highly cytotoxic. By participating for instance to the clearance of (E)-4-hydroxynon-2-enal/HNE in the lens epithelium prevents the formation of HNE-protein adducts and lens opacification. Also functions downstream of fructosamine-3-kinase in the fructosamine degradation pathway by catalyzing the oxidation of 3-deoxyglucosone, the carbohydrate product of fructosamine 3-phosphate decomposition, which is itself a potent glycating agent that may react with lysine and arginine side-chains of proteins. Also has an aminobutyraldehyde dehydrogenase activity and is probably part of an alternative pathway for the biosynthesis of GABA/4-aminobutanoate in midbrain, thereby playing a role in GABAergic synaptic transmission. The protein is Aldehyde dehydrogenase 1A1 of Gallus gallus (Chicken).